We begin with the raw amino-acid sequence, 257 residues long: Hydroxyethylthiazole kinase (257 aa).

Methionine 49 lines the substrate pocket. ATP-binding residues include arginine 124 and threonine 170. Glycine 197 contacts substrate.

This sequence belongs to the Thz kinase family. Mg(2+) is required as a cofactor.

The enzyme catalyses 5-(2-hydroxyethyl)-4-methylthiazole + ATP = 4-methyl-5-(2-phosphooxyethyl)-thiazole + ADP + H(+). It functions in the pathway cofactor biosynthesis; thiamine diphosphate biosynthesis; 4-methyl-5-(2-phosphoethyl)-thiazole from 5-(2-hydroxyethyl)-4-methylthiazole: step 1/1. Its function is as follows. Catalyzes the phosphorylation of the hydroxyl group of 4-methyl-5-beta-hydroxyethylthiazole (THZ). The protein is Hydroxyethylthiazole kinase of Klebsiella pneumoniae (strain 342).